The following is a 129-amino-acid chain: Glycoprotein hormone alpha-2 (129 aa).

Positions 1–23 (MPMASPQTLVLYLLVLAVTEAWG) are cleaved as a signal peptide. Intrachain disulfides connect cysteine 31/cysteine 89, cysteine 48/cysteine 103, cysteine 57/cysteine 119, and cysteine 61/cysteine 121. N-linked (GlcNAc...) asparagine glycosylation is found at asparagine 37 and asparagine 81.

Belongs to the glycoprotein hormones subunit alpha family. Heterodimer with GPHB5; this heterodimer interacts with thyroid-stimulating hormone receptor (TSHR), and hence stimulates cAMP production. Glycosylated. In terms of tissue distribution, found in a variety of tissues.

It is found in the secreted. Its function is as follows. Functions as a heterodimeric glycoprotein hormone with GPHB5 able to bind and activate the thyroid-stimulating hormone receptor (TSHR), leading to increased cAMP production. Plays a central role in controlling thyroid cell metabolism. The chain is Glycoprotein hormone alpha-2 (GPHA2) from Homo sapiens (Human).